The following is a 357-amino-acid chain: 3-isopropylmalate dehydrogenase (357 aa).

75–88 (GPKWDTLPPAERPE) provides a ligand contact to NAD(+). The substrate site is built by arginine 96, arginine 106, arginine 134, and aspartate 222. Residues aspartate 222, aspartate 246, and aspartate 250 each coordinate Mg(2+). Residue 279–291 (GSAPDIAGQQKAN) coordinates NAD(+).

The protein belongs to the isocitrate and isopropylmalate dehydrogenases family. LeuB type 1 subfamily. In terms of assembly, homodimer. Mg(2+) serves as cofactor. Mn(2+) is required as a cofactor.

The protein localises to the cytoplasm. The catalysed reaction is (2R,3S)-3-isopropylmalate + NAD(+) = 4-methyl-2-oxopentanoate + CO2 + NADH. Its pathway is amino-acid biosynthesis; L-leucine biosynthesis; L-leucine from 3-methyl-2-oxobutanoate: step 3/4. Its function is as follows. Catalyzes the oxidation of 3-carboxy-2-hydroxy-4-methylpentanoate (3-isopropylmalate) to 3-carboxy-4-methyl-2-oxopentanoate. The product decarboxylates to 4-methyl-2 oxopentanoate. The sequence is that of 3-isopropylmalate dehydrogenase from Moorella thermoacetica (strain ATCC 39073 / JCM 9320).